The chain runs to 385 residues: G2/mitotic-specific cyclin-B3 (385 aa).

Polar residues predominate over residues 1-16 (MMLRSQAKNVDLTSQA). Disordered stretches follow at residues 1–48 (MMLR…HSKG) and 63–88 (SAKR…QKSR). Composition is skewed to basic and acidic residues over residues 17–28 (DSRHQQKRKQAE) and 63–80 (SAKR…RDVE).

Belongs to the cyclin family. Cyclin AB subfamily.

The protein resides in the nucleus. Functionally, could be involved at the G2/M (mitosis) transition. Interacts with the CDK1 and CDK2 protein kinases. G2/M cyclins accumulate steadily during G2 and are abruptly destroyed at mitosis. Plays a role during oocyte meiosis II. This chain is G2/mitotic-specific cyclin-B3 (cyb-3), found in Caenorhabditis elegans.